Reading from the N-terminus, the 215-residue chain is Cytochrome b6 (215 aa).

Residues 32–52 form a helical membrane-spanning segment; that stretch reads IFYCLGGIVFVSFLIQVATGF. Residue Cys-35 participates in heme c binding. Heme b is bound by residues His-86 and His-100. 3 consecutive transmembrane segments (helical) span residues 90–110, 116–136, and 186–206; these read VSMM…TGGF, LTWV…VTGY, and LHTF…FLMI. Heme b is bound by residues His-187 and His-202.

It belongs to the cytochrome b family. PetB subfamily. In terms of assembly, the 4 large subunits of the cytochrome b6-f complex are cytochrome b6, subunit IV (17 kDa polypeptide, PetD), cytochrome f and the Rieske protein, while the 4 small subunits are PetG, PetL, PetM and PetN. The complex functions as a dimer. The cofactor is heme b. It depends on heme c as a cofactor.

The protein localises to the plastid. The protein resides in the chloroplast thylakoid membrane. In terms of biological role, component of the cytochrome b6-f complex, which mediates electron transfer between photosystem II (PSII) and photosystem I (PSI), cyclic electron flow around PSI, and state transitions. The protein is Cytochrome b6 of Pyropia yezoensis (Susabi-nori).